Consider the following 173-residue polypeptide: Protein sym1 (173 aa).

Transmembrane regions (helical) follow at residues 12–32, 52–72, 129–149, and 151–171; these read QPILTASVTSAVLFGSGDVLA, MALYGGAIFGPAATTWFGFLQ, ANLTIWPLVQGVNFSIVPLEY, and VLVVNLVSLGWNCLLSMINSG.

It belongs to the peroxisomal membrane protein PXMP2/4 family.

It localises to the mitochondrion inner membrane. May be involved in cellular response to stress. Required to maintain mitochondrial DNA (mtDNA) integrity and stability. The polypeptide is Protein sym1 (sym1) (Aspergillus oryzae (strain ATCC 42149 / RIB 40) (Yellow koji mold)).